Reading from the N-terminus, the 122-residue chain is Large ribosomal subunit protein bL12 (122 aa).

The protein belongs to the bacterial ribosomal protein bL12 family. Homodimer. Part of the ribosomal stalk of the 50S ribosomal subunit. Forms a multimeric L10(L12)X complex, where L10 forms an elongated spine to which 2 to 4 L12 dimers bind in a sequential fashion. Binds GTP-bound translation factors.

Its function is as follows. Forms part of the ribosomal stalk which helps the ribosome interact with GTP-bound translation factors. Is thus essential for accurate translation. The sequence is that of Large ribosomal subunit protein bL12 from Pseudomonas entomophila (strain L48).